We begin with the raw amino-acid sequence, 503 residues long: Cytochrome P450 3A17 (503 aa).

Cys-442 is a heme binding site.

It belongs to the cytochrome P450 family. It depends on heme as a cofactor.

The protein resides in the endoplasmic reticulum membrane. Its subcellular location is the microsome membrane. It catalyses the reaction an organic molecule + reduced [NADPH--hemoprotein reductase] + O2 = an alcohol + oxidized [NADPH--hemoprotein reductase] + H2O + H(+). Functionally, cytochromes P450 are a group of heme-thiolate monooxygenases. In liver microsomes, this enzyme is involved in an NADPH-dependent electron transport pathway. It oxidizes a variety of structurally unrelated compounds, including steroids, fatty acids, and xenobiotics. This Cavia porcellus (Guinea pig) protein is Cytochrome P450 3A17 (CYP3A17).